Reading from the N-terminus, the 84-residue chain is Polcalcin Ole e 3 (84 aa).

EF-hand domains lie at 6–40 and 41–76; these read QEVA…TLGS and VTPE…NRGL. The Ca(2+) site is built by Asp-19, Asn-21, Asp-23, Lys-25, Glu-30, Asp-54, Asp-56, Asp-58, and Glu-65.

As to expression, expressed exclusively in mature pollen.

Its subcellular location is the endomembrane system. The protein is Polcalcin Ole e 3 (OLE3) of Olea europaea (Common olive).